The following is a 281-amino-acid chain: Acetyl-coenzyme A carboxylase carboxyl transferase subunit beta (281 aa).

The segment at 1–23 (MAWFKREKKGISTSTEEKKEAPD) is disordered. The region spanning 25 to 281 (LWNKCPNCKK…LAAFLKMMKN (257 aa)) is the CoA carboxyltransferase N-terminal domain. The Zn(2+) site is built by Cys-29, Cys-32, Cys-48, and Cys-51. The C4-type zinc finger occupies 29–51 (CPNCKKALHSADLLENKYVCQYC).

The protein belongs to the AccD/PCCB family. Acetyl-CoA carboxylase is a heterohexamer composed of biotin carboxyl carrier protein (AccB), biotin carboxylase (AccC) and two subunits each of ACCase subunit alpha (AccA) and ACCase subunit beta (AccD). Requires Zn(2+) as cofactor.

It localises to the cytoplasm. The enzyme catalyses N(6)-carboxybiotinyl-L-lysyl-[protein] + acetyl-CoA = N(6)-biotinyl-L-lysyl-[protein] + malonyl-CoA. It participates in lipid metabolism; malonyl-CoA biosynthesis; malonyl-CoA from acetyl-CoA: step 1/1. Its function is as follows. Component of the acetyl coenzyme A carboxylase (ACC) complex. Biotin carboxylase (BC) catalyzes the carboxylation of biotin on its carrier protein (BCCP) and then the CO(2) group is transferred by the transcarboxylase to acetyl-CoA to form malonyl-CoA. This chain is Acetyl-coenzyme A carboxylase carboxyl transferase subunit beta, found in Pedobacter heparinus (strain ATCC 13125 / DSM 2366 / CIP 104194 / JCM 7457 / NBRC 12017 / NCIMB 9290 / NRRL B-14731 / HIM 762-3).